A 126-amino-acid polypeptide reads, in one-letter code: Protein ApaG (126 aa).

Positions Thr-2–His-126 constitute an ApaG domain.

This Shewanella sediminis (strain HAW-EB3) protein is Protein ApaG.